The primary structure comprises 92 residues: Small ribosomal subunit protein uS19 (92 aa).

Belongs to the universal ribosomal protein uS19 family.

Its function is as follows. Protein S19 forms a complex with S13 that binds strongly to the 16S ribosomal RNA. This is Small ribosomal subunit protein uS19 from Rhodopseudomonas palustris (strain BisB18).